The sequence spans 254 residues: Leucyl/phenylalanyl-tRNA--protein transferase (254 aa).

Belongs to the L/F-transferase family.

It localises to the cytoplasm. It catalyses the reaction N-terminal L-lysyl-[protein] + L-leucyl-tRNA(Leu) = N-terminal L-leucyl-L-lysyl-[protein] + tRNA(Leu) + H(+). The catalysed reaction is N-terminal L-arginyl-[protein] + L-leucyl-tRNA(Leu) = N-terminal L-leucyl-L-arginyl-[protein] + tRNA(Leu) + H(+). The enzyme catalyses L-phenylalanyl-tRNA(Phe) + an N-terminal L-alpha-aminoacyl-[protein] = an N-terminal L-phenylalanyl-L-alpha-aminoacyl-[protein] + tRNA(Phe). In terms of biological role, functions in the N-end rule pathway of protein degradation where it conjugates Leu, Phe and, less efficiently, Met from aminoacyl-tRNAs to the N-termini of proteins containing an N-terminal arginine or lysine. The polypeptide is Leucyl/phenylalanyl-tRNA--protein transferase (Burkholderia multivorans (strain ATCC 17616 / 249)).